Here is a 299-residue protein sequence, read N- to C-terminus: Coenzyme PQQ synthesis protein B (299 aa).

This sequence belongs to the PqqB family.

Its pathway is cofactor biosynthesis; pyrroloquinoline quinone biosynthesis. Its function is as follows. May be involved in the transport of PQQ or its precursor to the periplasm. The sequence is that of Coenzyme PQQ synthesis protein B from Xanthomonas campestris pv. campestris (strain 8004).